Here is a 79-residue protein sequence, read N- to C-terminus: Acyl carrier protein 2 (79 aa).

Positions Asp-2–Val-77 constitute a Carrier domain. Ser-37 is modified (O-(pantetheine 4'-phosphoryl)serine).

Belongs to the acyl carrier protein (ACP) family. In terms of processing, 4'-phosphopantetheine is transferred from CoA to a specific serine of apo-ACP by AcpS. This modification is essential for activity because fatty acids are bound in thioester linkage to the sulfhydryl of the prosthetic group.

The protein resides in the cytoplasm. Its pathway is lipid metabolism; fatty acid biosynthesis. Carrier of the growing fatty acid chain in fatty acid biosynthesis. The chain is Acyl carrier protein 2 from Pseudomonas aeruginosa (strain ATCC 15692 / DSM 22644 / CIP 104116 / JCM 14847 / LMG 12228 / 1C / PRS 101 / PAO1).